A 307-amino-acid chain; its full sequence is Aspartate carbamoyltransferase catalytic subunit (307 aa).

R54 and T55 together coordinate carbamoyl phosphate. K83 serves as a coordination point for L-aspartate. Carbamoyl phosphate is bound by residues R104, H132, and Q135. L-aspartate contacts are provided by R165 and R228. L267 and P268 together coordinate carbamoyl phosphate.

It belongs to the aspartate/ornithine carbamoyltransferase superfamily. ATCase family. As to quaternary structure, heterododecamer (2C3:3R2) of six catalytic PyrB chains organized as two trimers (C3), and six regulatory PyrI chains organized as three dimers (R2).

The catalysed reaction is carbamoyl phosphate + L-aspartate = N-carbamoyl-L-aspartate + phosphate + H(+). Its pathway is pyrimidine metabolism; UMP biosynthesis via de novo pathway; (S)-dihydroorotate from bicarbonate: step 2/3. In terms of biological role, catalyzes the condensation of carbamoyl phosphate and aspartate to form carbamoyl aspartate and inorganic phosphate, the committed step in the de novo pyrimidine nucleotide biosynthesis pathway. The sequence is that of Aspartate carbamoyltransferase catalytic subunit from Clostridium perfringens (strain SM101 / Type A).